The sequence spans 1030 residues: MDLPSLALIVGAAAFSPNPDERRAAEQSLNQLQHTPQHLIRILQIIVDGGSDLSVRQSASIHFKNFIAKHWEPHSGDQNIILPSDKNVVRNQILVFVSQVPPILRVQMGECLKTIIYADYPEQWPELLDWVKQNLQKPQVYGALFVLRILSSKYEFKSDEDRAPIHRVVEETFPHLLNIFNNLVHVENPSLEVADHIKLICKIFWSCIYLELPRPLFDPNFFNAWMGLFLNILERPVPVEGQPEDPELRKSWGWWKAKKWIAHILNRLYTRFGDLKLQNPDNKAFAQMFQINYAAKILECHLKLLNAIRIGGYLPDRVINLILQYLSNSISKSSMYNLLQPHLNTLLFEIVFPLMCFNDNDQMLWDEDPHEYVRKGYDIIEDLYSPRTASMDFVTELVRKRGKENFPKFIQFVVDIFKRYNEASLENKPYRLKDGALLAVGTLCDKLRQTEPYKSELENMLVQHVFPEFSSPAGHLRAKAAWVAGQYANIDFSDQSNFSKALHCVISGMCDLELPVRVDSVFALRSFIEACKDLDEIRPVLPQLLDEFFKLMKEVENEDLAFTLETIVYKFGEEISPYALGLCQNLASAFWRCIDTDNGDDETDDAGALAAVGCLRAISTILESISSLPHLYGQIEPQLLPIMRKMLTTDGQDVFEEVLEIVSYITTFSPTISLEMWSLWPLMMEALVDWAIDFFPNILVPLHNYISRGTGHYLTCKEPDYQQNLWNVISVLMANKNIDDSDLEPAPKLLGIVLQTCKGQVDQWVEPYLRITLDRLRGAEKSSFKCLLVEVVANAFYYNTPLALGILQRFGIATEIFTLWFQMLQEKKKSGARSNFKREHDKKVCILGLTSLFSLPAGQLPGEVLPHVFRALLELLVAYKDQLAEAAKAEEEEEDEDGDDDDMDEFQTDDEDEDGDDENPDETDGSTLRKLAAQAKDFRSYSDDDDFSDDDFSDDEELESPIDEVDPFVLFMDAVTAMQVSDSPRFQSLTQTLDPHYHGLASTIAQHTELRRAEILKEKLEKQSSATVAS.

Residue methionine 1 is modified to N-acetylmethionine. Residues 25-99 form the Importin N-terminal domain; the sequence is AEQSLNQLQH…RNQILVFVSQ (75 aa). Disordered stretches follow at residues 886–928 and 940–964; these read AAKA…GSTL and SYSD…PIDE. Composition is skewed to acidic residues over residues 890–924 and 943–964; these read EEEE…DETD and DDDD…PIDE.

The protein belongs to the importin beta family.

It localises to the cytoplasm. It is found in the nucleus. Functions probably in nuclear protein import, either by acting as autonomous nuclear transport receptor or as an adapter-like protein in association with other importin subunits. The sequence is that of Importin beta-like SAD2 homolog from Arabidopsis thaliana (Mouse-ear cress).